The chain runs to 708 residues: WD repeat-containing and planar cell polarity effector protein fritz homolog (708 aa).

2 WD repeats span residues 303 to 342 (PLRS…TLLA) and 343 to 382 (QADL…IRAQ).

The protein belongs to the WD repeat fritz family. In terms of assembly, interacts with sept2-a. Interacts with intu and fuz; fuz, intu and wdpcp probably form the core CPLANE (ciliogenesis and planar polarity effectors) complex.

It localises to the cell membrane. It is found in the cytoplasm. The protein resides in the cytoskeleton. The protein localises to the cilium axoneme. Its subcellular location is the cilium basal body. Its function is as follows. Probable effector of the planar cell polarity signaling pathway which regulates the septin cytoskeleton in both ciliogenesis and collective cell movements including covergent extension during gastrulation. Controls cell shape but not polarization during convergent extension. Proposed to function as core component of the CPLANE (ciliogenesis and planar polarity effectors) complex involved in the recruitment of peripheral IFT-A proteins to basal bodies. The sequence is that of WD repeat-containing and planar cell polarity effector protein fritz homolog (wdpcp) from Xenopus laevis (African clawed frog).